The primary structure comprises 210 residues: Uracil phosphoribosyltransferase (210 aa).

5-phospho-alpha-D-ribose 1-diphosphate-binding positions include Arg-78, Arg-103, and 130 to 138 (DPMLATGGT). Uracil is bound by residues Ile-193 and 198–200 (GDA). Position 199 (Asp-199) interacts with 5-phospho-alpha-D-ribose 1-diphosphate.

Belongs to the UPRTase family. The cofactor is Mg(2+).

The catalysed reaction is UMP + diphosphate = 5-phospho-alpha-D-ribose 1-diphosphate + uracil. It functions in the pathway pyrimidine metabolism; UMP biosynthesis via salvage pathway; UMP from uracil: step 1/1. With respect to regulation, allosterically activated by GTP. Catalyzes the conversion of uracil and 5-phospho-alpha-D-ribose 1-diphosphate (PRPP) to UMP and diphosphate. This chain is Uracil phosphoribosyltransferase, found in Stenotrophomonas maltophilia (strain R551-3).